Reading from the N-terminus, the 519-residue chain is Probable cytosol aminopeptidase (519 aa).

Residues lysine 283 and aspartate 288 each coordinate Mn(2+). Lysine 295 is a catalytic residue. Mn(2+) is bound by residues aspartate 306, aspartate 365, and glutamate 367. The active site involves arginine 369.

This sequence belongs to the peptidase M17 family. Requires Mn(2+) as cofactor.

The protein resides in the cytoplasm. The catalysed reaction is Release of an N-terminal amino acid, Xaa-|-Yaa-, in which Xaa is preferably Leu, but may be other amino acids including Pro although not Arg or Lys, and Yaa may be Pro. Amino acid amides and methyl esters are also readily hydrolyzed, but rates on arylamides are exceedingly low.. The enzyme catalyses Release of an N-terminal amino acid, preferentially leucine, but not glutamic or aspartic acids.. Presumably involved in the processing and regular turnover of intracellular proteins. Catalyzes the removal of unsubstituted N-terminal amino acids from various peptides. This Mycobacterium ulcerans (strain Agy99) protein is Probable cytosol aminopeptidase.